Consider the following 77-residue polypeptide: Acyl carrier protein (77 aa).

The 76-residue stretch at 1–76 (MENFDKVKDI…DAVKYINSLE (76 aa)) folds into the Carrier domain. At Ser36 the chain carries O-(pantetheine 4'-phosphoryl)serine.

This sequence belongs to the acyl carrier protein (ACP) family. Post-translationally, 4'-phosphopantetheine is transferred from CoA to a specific serine of apo-ACP by AcpS. This modification is essential for activity because fatty acids are bound in thioester linkage to the sulfhydryl of the prosthetic group.

Its subcellular location is the cytoplasm. Its pathway is lipid metabolism; fatty acid biosynthesis. Functionally, carrier of the growing fatty acid chain in fatty acid biosynthesis. The polypeptide is Acyl carrier protein (Staphylococcus epidermidis (strain ATCC 12228 / FDA PCI 1200)).